We begin with the raw amino-acid sequence, 225 residues long: MISWINGDLVDLWQTNQKSFVLINCQGLGYEIQILESFFLKLKTNQISTKNITLWIKHIKKEDSDLLFGFTSKDQKNFFIEILSIRGVGSQIGIGILNKFSISEVINAIKTQDKKLICSVPGIGQKMSERLILELKSKFKSEILSEEEKSKDEFEIKDPEIIKMIEDLQLTLQSLSYKNKEINTILPIIIKEIDHLGKKENSLSFEKLLKLAMHYLDEDSSNKDR.

The segment at 1-71 (MISWINGDLV…EDSDLLFGFT (71 aa)) is domain I. Positions 72-150 (SKDQKNFFIE…SEILSEEEKS (79 aa)) are domain II. Positions 151-161 (KDEFEIKDPEI) are flexible linker. The interval 161 to 225 (IIKMIEDLQL…LDEDSSNKDR (65 aa)) is domain III.

The protein belongs to the RuvA family. In terms of assembly, homotetramer. Forms an RuvA(8)-RuvB(12)-Holliday junction (HJ) complex. HJ DNA is sandwiched between 2 RuvA tetramers; dsDNA enters through RuvA and exits via RuvB. An RuvB hexamer assembles on each DNA strand where it exits the tetramer. Each RuvB hexamer is contacted by two RuvA subunits (via domain III) on 2 adjacent RuvB subunits; this complex drives branch migration. In the full resolvosome a probable DNA-RuvA(4)-RuvB(12)-RuvC(2) complex forms which resolves the HJ.

The protein localises to the cytoplasm. The RuvA-RuvB-RuvC complex processes Holliday junction (HJ) DNA during genetic recombination and DNA repair, while the RuvA-RuvB complex plays an important role in the rescue of blocked DNA replication forks via replication fork reversal (RFR). RuvA specifically binds to HJ cruciform DNA, conferring on it an open structure. The RuvB hexamer acts as an ATP-dependent pump, pulling dsDNA into and through the RuvAB complex. HJ branch migration allows RuvC to scan DNA until it finds its consensus sequence, where it cleaves and resolves the cruciform DNA. In Prochlorococcus marinus (strain AS9601), this protein is Holliday junction branch migration complex subunit RuvA.